The following is a 107-amino-acid chain: Large ribosomal subunit protein uL24 (107 aa).

The protein belongs to the universal ribosomal protein uL24 family. As to quaternary structure, part of the 50S ribosomal subunit.

Functionally, one of two assembly initiator proteins, it binds directly to the 5'-end of the 23S rRNA, where it nucleates assembly of the 50S subunit. In terms of biological role, one of the proteins that surrounds the polypeptide exit tunnel on the outside of the subunit. The polypeptide is Large ribosomal subunit protein uL24 (Neisseria meningitidis serogroup C (strain 053442)).